The following is a 357-amino-acid chain: MFAKLEDIERSFMDLEQELADPEVYNNQERYRKVTMAHAELGDVVAAFREYKQLSADLEDNKEMAKDSDPEIREMAEMEIAEIKDRLPKLEEELKLLLLPKDPMDGKNIILEIRAGTGGEEAALFAADLFRMYSRFAESNGWKVEVMNSNPTGTGGFKEIIAAISGSRIYSMMKYESGTHRVQRVPATETQGRIHTSAATVAIMPEAEEVDVQVRNEDLRIDVFRASGPGGQSVNTTDSAIRITHLPTGLVVICQDEKSQHKNKAKAMKVLCSRLLQAEQDKQHAEMAEQRRAQVGSGDRSERIRTYNFPQGRVTDHRINLTLYKLDAVIEGDMQELVESLISHYQSEALKQQAQDG.

N5-methylglutamine is present on Gln232.

Belongs to the prokaryotic/mitochondrial release factor family. Post-translationally, methylated by PrmC. Methylation increases the termination efficiency of RF1.

The protein resides in the cytoplasm. In terms of biological role, peptide chain release factor 1 directs the termination of translation in response to the peptide chain termination codons UAG and UAA. The protein is Peptide chain release factor 1 of Maridesulfovibrio salexigens (strain ATCC 14822 / DSM 2638 / NCIMB 8403 / VKM B-1763) (Desulfovibrio salexigens).